Consider the following 675-residue polypeptide: DNA ligase (675 aa).

NAD(+)-binding positions include 35 to 39 (DSEYD), 84 to 85 (SL), and Glu-115. Catalysis depends on Lys-117, which acts as the N6-AMP-lysine intermediate. Residues Arg-138, Glu-175, Lys-292, and Lys-316 each contribute to the NAD(+) site. The Zn(2+) site is built by Cys-410, Cys-413, Cys-428, and Cys-434. The region spanning 593-675 (QIVQPLLGRT…RNFLDDTSFP (83 aa)) is the BRCT domain.

This sequence belongs to the NAD-dependent DNA ligase family. LigA subfamily. The cofactor is Mg(2+). Mn(2+) is required as a cofactor.

It catalyses the reaction NAD(+) + (deoxyribonucleotide)n-3'-hydroxyl + 5'-phospho-(deoxyribonucleotide)m = (deoxyribonucleotide)n+m + AMP + beta-nicotinamide D-nucleotide.. Its function is as follows. DNA ligase that catalyzes the formation of phosphodiester linkages between 5'-phosphoryl and 3'-hydroxyl groups in double-stranded DNA using NAD as a coenzyme and as the energy source for the reaction. It is essential for DNA replication and repair of damaged DNA. This is DNA ligase from Nitrosococcus oceani (strain ATCC 19707 / BCRC 17464 / JCM 30415 / NCIMB 11848 / C-107).